The sequence spans 479 residues: Glutamate--tRNA ligase (479 aa).

Positions 9–19 match the 'HIGH' region motif; the sequence is PSPTGNLHIGT. The 'KMSKS' region signature appears at 243 to 247; it reads KLSKR. Lys-246 provides a ligand contact to ATP.

It belongs to the class-I aminoacyl-tRNA synthetase family. Glutamate--tRNA ligase type 1 subfamily. In terms of assembly, monomer.

The protein resides in the cytoplasm. It carries out the reaction tRNA(Glu) + L-glutamate + ATP = L-glutamyl-tRNA(Glu) + AMP + diphosphate. Its function is as follows. Catalyzes the attachment of glutamate to tRNA(Glu) in a two-step reaction: glutamate is first activated by ATP to form Glu-AMP and then transferred to the acceptor end of tRNA(Glu). This chain is Glutamate--tRNA ligase, found in Synechococcus sp. (strain JA-2-3B'a(2-13)) (Cyanobacteria bacterium Yellowstone B-Prime).